Consider the following 628-residue polypeptide: Putative serine esterase Mb1866c (628 aa).

Serine 156 acts as the Acyl-ester intermediate in catalysis. Active-site charge relay system residues include aspartate 322 and histidine 350.

Belongs to the CocE/NonD hydrolase family.

This Mycobacterium bovis (strain ATCC BAA-935 / AF2122/97) protein is Putative serine esterase Mb1866c.